The primary structure comprises 200 residues: Recombination protein RecR (200 aa).

A C4-type zinc finger spans residues 58–75; sequence CSNCFCLKISQTSPCNFC. One can recognise a Toprim domain in the interval 82–177; it reads SSLCIVATPK…KISRLALGMP (96 aa).

Belongs to the RecR family.

Its function is as follows. May play a role in DNA repair. It seems to be involved in an RecBC-independent recombinational process of DNA repair. It may act with RecF and RecO. The chain is Recombination protein RecR from Chlamydia trachomatis serovar D (strain ATCC VR-885 / DSM 19411 / UW-3/Cx).